Here is a 171-residue protein sequence, read N- to C-terminus: Dual specificity protein phosphatase OPG106 (171 aa).

A dimerization region spans residues 1–27 (MDKKSLYKYLLLRSTGDMHKAKSPTIM). The Tyrosine-protein phosphatase domain maps to 23–171 (SPTIMTRVTN…IIEKYVIDKN (149 aa)). Catalysis depends on Cys110, which acts as the Phosphocysteine intermediate.

Belongs to the protein-tyrosine phosphatase family. Non-receptor class dual specificity subfamily. Homodimer.

The protein resides in the virion. It localises to the host cytoplasm. The catalysed reaction is O-phospho-L-tyrosyl-[protein] + H2O = L-tyrosyl-[protein] + phosphate. The enzyme catalyses O-phospho-L-seryl-[protein] + H2O = L-seryl-[protein] + phosphate. In terms of biological role, serine/tyrosine phosphatase which down-regulates cellular antiviral response by dephosphorylating activated host STAT1 and blocking interferon (IFN)-stimulated innate immune responses. Dephosphorylates the OPG144 protein. This is Dual specificity protein phosphatase OPG106 (OPG106) from Bos taurus (Bovine).